We begin with the raw amino-acid sequence, 577 residues long: Optineurin (577 aa).

2 disordered regions span residues 1-32 (MSHQ…HPNL) and 101-143 (SHEN…KDQL). A coiled-coil region spans residues 38 to 170 (EELLQQMKEL…VSELQLKLNS (133 aa)). Residues 58-209 (MKLNNQAMKG…GPTRTVSTGT (152 aa)) are interaction with Rab8. Residues 176 to 181 (DSFVEI) carry the LIR motif. S177 carries the phosphoserine; by TBK1 modification. The span at 186–197 (GEAEGSVKEIKH) shows a compositional bias: basic and acidic residues. 2 disordered regions span residues 186–209 (GEAE…STGT) and 261–297 (VSDF…TVGS). S198 is modified (phosphoserine). Positions 239–508 (CLREGNQKVE…LLKENDAFED (270 aa)) form a coiled coil. 2 stretches are compositionally biased toward basic and acidic residues: residues 261 to 274 (VSDF…RSEI) and 281 to 292 (STEKENDEEKGP). Phosphoserine is present on S342. Residues 411 to 577 (TRKESEKVDR…LQIHVMDCII (167 aa)) form an interaction with HD region. The interval 412–520 (RKESEKVDRA…RQSLMEMQSR (109 aa)) is interaction with MYO6. The short motif at 474–479 (DFHAER) is the UBAN element. S526 is modified (phosphoserine). Residues 547–577 (QRNIPIHSCPKCGEVLPDIDTLQIHVMDCII) form a CCHC NOA-type zinc finger. C555, C558, H571, and C575 together coordinate Zn(2+).

In terms of assembly, self-associates. Interacts with HD. Interacts with GTF3A. Interacts with MYO6. Interacts (via UBAN) with ubiquitinated TFRC. Interacts with GTP-bound Rab8 (RAB8A and/or RAB8B). Interacts with TBC1D17. Interacts with TBK1. Interacts with TRAF3. Binds to linear ubiquitin chains. Interacts with LC3 family members MAP1LC3A, MAP1LC3B, GABARAP, GABARAPL1 and GABARAPL2; OPTN phosphorylation increases the association (at least with MAP1LC3B). Interacts with RAB12; the interaction may be indirect. Interacts with TBK1; this interaction leads to the Golgi localization of TBK1 and its subsequent activation. Interacts with palmitoyltransferase ZDHHC17/HIP14; the interaction does not lead to palmitoylation of OPTN. Interacts with CYLD. Interacts with TOM1; the interaction is indirect and is mediated by MYO6, which acts as a bridge between TOM1 and OPTN. Interacts with USP12; the interaction is independent of USP12 deubiquitinase activity and may be involved in regulation of autophagic flux. As to quaternary structure, (Microbial infection) Interacts with E3 14.7 kDa protein of group C human adenovirus. Interacts with Bluetongue virus protein NS3. In terms of processing, phosphorylated by TBK1, leading to restrict bacterial proliferation in case of infection. Phosphorylation is induced by phorbol esters and decreases its half-time. In terms of tissue distribution, present in aqueous humor of the eye (at protein level). Expressed in the trabecular meshwork (at protein level). Expressed in nonpigmented ciliary epithelium (at protein level). Expressed at high levels in skeletal muscle, also detected in heart, brain, pancreas, kidney, placenta and liver. Expressed in dermal fibroblasts (at protein level).

It localises to the cytoplasm. Its subcellular location is the perinuclear region. The protein resides in the golgi apparatus. It is found in the trans-Golgi network. The protein localises to the cytoplasmic vesicle. It localises to the autophagosome. Its subcellular location is the recycling endosome. Its function is as follows. Plays an important role in the maintenance of the Golgi complex, in membrane trafficking, in exocytosis, through its interaction with myosin VI and Rab8. Links myosin VI to the Golgi complex and plays an important role in Golgi ribbon formation. Plays a role in the activation of innate immune response during viral infection. Mechanistically, recruits TBK1 at the Golgi apparatus, promoting its trans-phosphorylation after RLR or TLR3 stimulation. In turn, activated TBK1 phosphorylates its downstream partner IRF3 to produce IFN-beta/IFNB1. Plays a neuroprotective role in the eye and optic nerve. May act by regulating membrane trafficking and cellular morphogenesis via a complex that contains Rab8 and huntingtin (HD). Mediates the interaction of Rab8 with the probable GTPase-activating protein TBC1D17 during Rab8-mediated endocytic trafficking, such as that of transferrin receptor (TFRC/TfR); regulates Rab8 recruitment to tubules emanating from the endocytic recycling compartment. Autophagy receptor that interacts directly with both the cargo to become degraded and an autophagy modifier of the MAP1 LC3 family; targets ubiquitin-coated bacteria (xenophagy), such as cytoplasmic Salmonella enterica, and appears to function in the same pathway as SQSTM1 and CALCOCO2/NDP52. (Microbial infection) May constitute a cellular target for various viruses, such as adenovirus E3 14.7 or Bluetongue virus, to inhibit innate immune response. During RNA virus infection, such as that of Sendai virus, negatively regulates the induction of IFNB1. This is Optineurin (OPTN) from Homo sapiens (Human).